Reading from the N-terminus, the 447-residue chain is Na(+)-translocating NADH-quinone reductase subunit A (447 aa).

It belongs to the NqrA family. Composed of six subunits; NqrA, NqrB, NqrC, NqrD, NqrE and NqrF.

It carries out the reaction a ubiquinone + n Na(+)(in) + NADH + H(+) = a ubiquinol + n Na(+)(out) + NAD(+). Its function is as follows. NQR complex catalyzes the reduction of ubiquinone-1 to ubiquinol by two successive reactions, coupled with the transport of Na(+) ions from the cytoplasm to the periplasm. NqrA to NqrE are probably involved in the second step, the conversion of ubisemiquinone to ubiquinol. This chain is Na(+)-translocating NADH-quinone reductase subunit A, found in Klebsiella pneumoniae (strain 342).